Here is a 159-residue protein sequence, read N- to C-terminus: Ribosomal RNA large subunit methyltransferase H (159 aa).

Residues L76 and G108 each contribute to the S-adenosyl-L-methionine site.

Belongs to the RNA methyltransferase RlmH family. In terms of assembly, homodimer.

It is found in the cytoplasm. It carries out the reaction pseudouridine(1915) in 23S rRNA + S-adenosyl-L-methionine = N(3)-methylpseudouridine(1915) in 23S rRNA + S-adenosyl-L-homocysteine + H(+). Specifically methylates the pseudouridine at position 1915 (m3Psi1915) in 23S rRNA. This is Ribosomal RNA large subunit methyltransferase H from Lactiplantibacillus plantarum (strain ATCC BAA-793 / NCIMB 8826 / WCFS1) (Lactobacillus plantarum).